Reading from the N-terminus, the 260-residue chain is Putative cysteine-rich repeat secretory protein 23 (260 aa).

The N-terminal stretch at 1–31 is a signal peptide; the sequence is MSSSFVYKSLFLVPILAVVAMQLSFVQSVLS. Gnk2-homologous domains lie at 38–136 and 142–254; these read YLHH…NISY and LPEQ…LYLF.

Belongs to the cysteine-rich repeat secretory protein family.

The protein resides in the secreted. The sequence is that of Putative cysteine-rich repeat secretory protein 23 (CRRSP23) from Arabidopsis thaliana (Mouse-ear cress).